The following is a 1265-amino-acid chain: 1-phosphatidylinositol 4,5-bisphosphate phosphodiesterase gamma-2 (1265 aa).

Residues 20 to 131 (RALELGTVMT…WLSGLKILHQ (112 aa)) enclose the PH domain. Residues 312 to 456 (QDMNNPLSHY…LREKIIIKHK (145 aa)) enclose the PI-PLC X-box domain. Catalysis depends on residues His327 and His372. SH2 domains lie at 532 to 635 (WFHK…TDPV) and 646 to 735 (WYYD…RYPV). Residues Tyr753 and Tyr759 each carry the phosphotyrosine; by BTK modification. Residues 769–829 (MPQRTVKALY…PSNYVEDISA (61 aa)) enclose the SH3 domain. A PI-PLC Y-box domain is found at 930–1044 (LSDLVVYCKP…GYVLQPESMR (115 aa)). A C2 domain is found at 1038 to 1169 (LQPESMRSEK…SGFRSVPLKN (132 aa)). At Tyr1197 the chain carries Phosphotyrosine; by BTK. A phosphotyrosine mark is found at Tyr1217 and Tyr1245.

As to quaternary structure, part of a complex composed of EEIG1, TNFRSF11A/RANK, PLCG2, GAB2, TEC and BTK; complex formation increases in the presence of TNFSF11/RANKL. Interacts (via SH2 domain) with CSF1R (tyrosine phosphorylated). Interacts constitutively with THEMIS2. Requires Ca(2+) as cofactor. In terms of processing, phosphorylated on tyrosine residues by CSF1R. Phosphorylated on tyrosine residues by BTK and SYK; upon ligand-induced activation of a variety of growth factor receptors and immune system receptors. Phosphorylation leads to increased phospholipase activity.

The protein resides in the membrane raft. The enzyme catalyses a 1,2-diacyl-sn-glycero-3-phospho-(1D-myo-inositol-4,5-bisphosphate) + H2O = 1D-myo-inositol 1,4,5-trisphosphate + a 1,2-diacyl-sn-glycerol + H(+). Functionally, the production of the second messenger molecules diacylglycerol (DAG) and inositol 1,4,5-trisphosphate (IP3) is mediated by activated phosphatidylinositol-specific phospholipase C enzymes. It is a crucial enzyme in transmembrane signaling. The sequence is that of 1-phosphatidylinositol 4,5-bisphosphate phosphodiesterase gamma-2 from Rattus norvegicus (Rat).